The chain runs to 737 residues: Amino-acid acetyltransferase, mitochondrial (737 aa).

A mitochondrion-targeting transit peptide spans 1-47 (MSRSTVLGWCTQSCRLLQKHDHSFSFPTFNGSPPLKKRRFCDSAAPA). Residues 43 to 78 (SAAPAAPRPSIHRPSEYIPHSKSGGEAPQDLGHKAR) are disordered. The N-acetyltransferase domain maps to 558–727 (GEPALTLDDP…YEGVCRAIEP (170 aa)).

It belongs to the acetyltransferase family.

The protein resides in the mitochondrion. It carries out the reaction L-glutamate + acetyl-CoA = N-acetyl-L-glutamate + CoA + H(+). Its pathway is amino-acid biosynthesis; L-arginine biosynthesis; N(2)-acetyl-L-ornithine from L-glutamate: step 1/4. Its function is as follows. N-acetylglutamate synthase involved in arginine biosynthesis. The protein is Amino-acid acetyltransferase, mitochondrial (ARG2) of Coccidioides immitis (strain RS) (Valley fever fungus).